The chain runs to 565 residues: NAD-dependent malic enzyme (565 aa).

The Proton donor role is filled by Tyr-104. NAD(+) is bound at residue Arg-157. Residue Lys-175 is the Proton acceptor of the active site. A divalent metal cation contacts are provided by Glu-246, Asp-247, and Asp-270. NAD(+) is bound by residues Asp-270 and Asn-418.

The protein belongs to the malic enzymes family. In terms of assembly, homotetramer. Mg(2+) is required as a cofactor. Requires Mn(2+) as cofactor.

It carries out the reaction (S)-malate + NAD(+) = pyruvate + CO2 + NADH. It catalyses the reaction oxaloacetate + H(+) = pyruvate + CO2. This Escherichia coli O139:H28 (strain E24377A / ETEC) protein is NAD-dependent malic enzyme.